We begin with the raw amino-acid sequence, 221 residues long: Probable transaldolase (221 aa).

Catalysis depends on K83, which acts as the Schiff-base intermediate with substrate.

It belongs to the transaldolase family. Type 3B subfamily.

It localises to the cytoplasm. The catalysed reaction is D-sedoheptulose 7-phosphate + D-glyceraldehyde 3-phosphate = D-erythrose 4-phosphate + beta-D-fructose 6-phosphate. It functions in the pathway carbohydrate degradation; pentose phosphate pathway; D-glyceraldehyde 3-phosphate and beta-D-fructose 6-phosphate from D-ribose 5-phosphate and D-xylulose 5-phosphate (non-oxidative stage): step 2/3. Functionally, transaldolase is important for the balance of metabolites in the pentose-phosphate pathway. This is Probable transaldolase from Herpetosiphon aurantiacus (strain ATCC 23779 / DSM 785 / 114-95).